The primary structure comprises 280 residues: NAD(P)H-quinone oxidoreductase subunit K, chloroplastic (280 aa).

[4Fe-4S] cluster-binding residues include cysteine 65, cysteine 66, cysteine 130, and cysteine 161. A disordered region spans residues 257-280 (LLKDWKQSNQKQEQNVKMMKEEEA).

It belongs to the complex I 20 kDa subunit family. In terms of assembly, NDH is composed of at least 16 different subunits, 5 of which are encoded in the nucleus. [4Fe-4S] cluster serves as cofactor.

Its subcellular location is the plastid. It localises to the chloroplast thylakoid membrane. The catalysed reaction is a plastoquinone + NADH + (n+1) H(+)(in) = a plastoquinol + NAD(+) + n H(+)(out). The enzyme catalyses a plastoquinone + NADPH + (n+1) H(+)(in) = a plastoquinol + NADP(+) + n H(+)(out). Its function is as follows. NDH shuttles electrons from NAD(P)H:plastoquinone, via FMN and iron-sulfur (Fe-S) centers, to quinones in the photosynthetic chain and possibly in a chloroplast respiratory chain. The immediate electron acceptor for the enzyme in this species is believed to be plastoquinone. Couples the redox reaction to proton translocation, and thus conserves the redox energy in a proton gradient. The polypeptide is NAD(P)H-quinone oxidoreductase subunit K, chloroplastic (Staurastrum punctulatum (Green alga)).